We begin with the raw amino-acid sequence, 275 residues long: Phosphate import ATP-binding protein PstB (275 aa).

One can recognise an ABC transporter domain in the interval 28–270 (MSAKNVSVFY…PREERTKDYI (243 aa)). 60-67 (GPSGCGKS) contributes to the ATP binding site.

The protein belongs to the ABC transporter superfamily. Phosphate importer (TC 3.A.1.7) family. The complex is composed of two ATP-binding proteins (PstB), two transmembrane proteins (PstC and PstA) and a solute-binding protein (PstS).

Its subcellular location is the cell inner membrane. The catalysed reaction is phosphate(out) + ATP + H2O = ADP + 2 phosphate(in) + H(+). In terms of biological role, part of the ABC transporter complex PstSACB involved in phosphate import. Responsible for energy coupling to the transport system. The chain is Phosphate import ATP-binding protein PstB from Novosphingobium aromaticivorans (strain ATCC 700278 / DSM 12444 / CCUG 56034 / CIP 105152 / NBRC 16084 / F199).